Here is a 1401-residue protein sequence, read N- to C-terminus: DNA-directed RNA polymerase subunit beta' (1401 aa).

Zn(2+) contacts are provided by Cys70, Cys72, Cys85, and Cys88. Positions 460, 462, and 464 each coordinate Mg(2+). Zn(2+)-binding residues include Cys808, Cys882, Cys889, and Cys892.

It belongs to the RNA polymerase beta' chain family. As to quaternary structure, the RNAP catalytic core consists of 2 alpha, 1 beta, 1 beta' and 1 omega subunit. When a sigma factor is associated with the core the holoenzyme is formed, which can initiate transcription. Requires Mg(2+) as cofactor. The cofactor is Zn(2+).

It carries out the reaction RNA(n) + a ribonucleoside 5'-triphosphate = RNA(n+1) + diphosphate. Functionally, DNA-dependent RNA polymerase catalyzes the transcription of DNA into RNA using the four ribonucleoside triphosphates as substrates. The sequence is that of DNA-directed RNA polymerase subunit beta' from Legionella pneumophila subsp. pneumophila (strain Philadelphia 1 / ATCC 33152 / DSM 7513).